Here is a 202-residue protein sequence, read N- to C-terminus: B-cell CLL/lymphoma 7 protein family member B (202 aa).

The interval 53-202 (DSKEKEKSKS…PVVPQTTSES (150 aa)) is disordered. Polar residues predominate over residues 90–99 (ENSNQSSVSD). Residues 107 to 123 (SSTNSSPSPQQSESLSP) are compositionally biased toward low complexity. Phosphoserine is present on residues Ser-114, Ser-118, Ser-120, Ser-122, Ser-127, Ser-148, and Ser-152.

Belongs to the BCL7 family.

Positive regulator of apoptosis. Plays a role in the Wnt signaling pathway, negatively regulating the expression of Wnt signaling components CTNNB1 and HMGA1. Involved in cell cycle progression, maintenance of the nuclear structure and stem cell differentiation. May play a role in lung tumor development or progression. This chain is B-cell CLL/lymphoma 7 protein family member B (Bcl7b), found in Mus musculus (Mouse).